A 424-amino-acid chain; its full sequence is tRNA modification GTPase MnmE (424 aa).

Residues Arg20, Glu77, and Arg117 each contribute to the (6S)-5-formyl-5,6,7,8-tetrahydrofolate site. Residues 212-351 (GVRVVFAGPP…LVRDLRDAAR (140 aa)) form the TrmE-type G domain. Residue Asn222 participates in K(+) binding. GTP contacts are provided by residues 222 to 227 (NAGKST), 241 to 247 (SPIAGTT), and 266 to 269 (DTAG). Ser226 provides a ligand contact to Mg(2+). Ser241, Ile243, and Thr246 together coordinate K(+). Thr247 is a Mg(2+) binding site. Residue Lys424 coordinates (6S)-5-formyl-5,6,7,8-tetrahydrofolate.

It belongs to the TRAFAC class TrmE-Era-EngA-EngB-Septin-like GTPase superfamily. TrmE GTPase family. As to quaternary structure, homodimer. Heterotetramer of two MnmE and two MnmG subunits. It depends on K(+) as a cofactor.

Its subcellular location is the cytoplasm. Its function is as follows. Exhibits a very high intrinsic GTPase hydrolysis rate. Involved in the addition of a carboxymethylaminomethyl (cmnm) group at the wobble position (U34) of certain tRNAs, forming tRNA-cmnm(5)s(2)U34. This chain is tRNA modification GTPase MnmE, found in Erythrobacter litoralis (strain HTCC2594).